Reading from the N-terminus, the 377-residue chain is Meiotic driver cw9 (377 aa).

2 disordered regions span residues methionine 1 to asparagine 49 and asparagine 64 to aspartate 100. Residues serine 11–proline 29 show a composition bias toward basic and acidic residues. 7 helical membrane passes run phenylalanine 105–cysteine 125, tryptophan 142–phenylalanine 162, valine 172–valine 192, valine 218–phenylalanine 238, cysteine 252–leucine 272, phenylalanine 276–leucine 296, and alanine 306–tyrosine 326.

The protein belongs to the WTF family. Homomer. Forms protein aggregates. The two isoforms can interact with each other and with themselves. High sequence similarity is required for their interaction.

The protein resides in the spore membrane. Its subcellular location is the vacuole membrane. The protein localises to the ascus epiplasm. It is found in the cytoplasm. It localises to the endoplasmic reticulum membrane. Promotes unequal transmission of alleles from the parental zygote to progeny spores by acting as poison/antidote system where the poison and antidote proteins are produced from the same locus; the poison component is trans-acting and targets all spores within an ascus whereas the antidote component is spore-specific, leading to poisoning of all progeny that do not inherit the allele. Functionally, localizes isoform 2 to the vacuole thereby facilitating its degradation. In terms of biological role, forms toxic aggregates that disrupt spore maturation. The sequence is that of Meiotic driver cw9 from Schizosaccharomyces pombe (Fission yeast).